The primary structure comprises 231 residues: Large ribosomal subunit protein uL1 (231 aa).

This sequence belongs to the universal ribosomal protein uL1 family. In terms of assembly, part of the 50S ribosomal subunit.

Its function is as follows. Binds directly to 23S rRNA. The L1 stalk is quite mobile in the ribosome, and is involved in E site tRNA release. Functionally, protein L1 is also a translational repressor protein, it controls the translation of the L11 operon by binding to its mRNA. In Francisella tularensis subsp. tularensis (strain FSC 198), this protein is Large ribosomal subunit protein uL1.